Consider the following 532-residue polypeptide: Zinc finger protein 350 (532 aa).

A KRAB domain is found at 8-79; it reads ITLEDVAVDF…EDGIHSGACS (72 aa). 8 consecutive C2H2-type zinc fingers follow at residues 206–228, 234–256, 262–284, 290–312, 318–340, 346–368, 374–396, and 402–424; these read HVCS…QVMH, HRCS…QRTH, YECP…QKTH, YICS…QRIH, YICN…QRFH, FVCS…QRIH, FECS…QRTH, and YGCN…KRIH. Basic and acidic residues predominate over residues 427 to 443; the sequence is EKQEAAKVENPPAERHS. The segment at 427–465 is disordered; the sequence is EKQEAAKVENPPAERHSSLHTSDVMQEKNSANGATTQVP. A compositionally biased stretch (polar residues) spans 445–465; the sequence is LHTSDVMQEKNSANGATTQVP.

The protein belongs to the krueppel C2H2-type zinc-finger protein family. Interacts with BRCA1. Interacts with RNF11. In terms of tissue distribution, widely expressed.

Its subcellular location is the nucleus. The protein resides in the nucleus matrix. Functionally, transcriptional repressor. Binds to a specific sequence, 5'-GGGxxxCAGxxxTTT-3', within GADD45 intron 3. The polypeptide is Zinc finger protein 350 (ZNF350) (Homo sapiens (Human)).